The chain runs to 263 residues: Probable ribosomal RNA small subunit methyltransferase A (263 aa).

S-adenosyl-L-methionine contacts are provided by leucine 12, glycine 37, glutamate 58, aspartate 83, and asparagine 100.

The protein belongs to the class I-like SAM-binding methyltransferase superfamily. rRNA adenine N(6)-methyltransferase family. RsmA subfamily.

The protein localises to the cytoplasm. Its function is as follows. Specifically dimethylates two adjacent adenosines in the loop of a conserved hairpin near the 3'-end of 16S rRNA in the 30S particle. May play a critical role in biogenesis of 30S subunits. This chain is Probable ribosomal RNA small subunit methyltransferase A, found in Methanococcus maripaludis (strain C7 / ATCC BAA-1331).